A 912-amino-acid polypeptide reads, in one-letter code: MLYSPLYQSIRLILFGALGLSSLTVSAAINQTDSMMPEPLVTDSSNQYADDESIQESLKRLAEFYERTPDTNVATSNNTGTNVSDEQSNIQNSLTPVTTNIPTVGSNLRLLPHTVDSAARCEGQWVYPKKNPNYQRAVNEAGASNGQPAPNLNGLPNNQAPLFAESDYGYYDNVDYAELSGNVIIDQGTQHIEAEKIVLDLSNGVAAAQGKVMFTDQATGNASATQTQDRVQKNGKTSLTDKAAQGGLIGVADNLNYNTETGQSTATNVAFASVELQAHGYAKRLNRPNESQYELDEVMYSTCPPTNRKWQFDAKSIDLDTETGRGEAYNTTFRIADVPVFYLPYFNFPIDSRRGSGFLLPNASISSENGLEVDVPYYFNLAPNYDATLSTHIYTTRNPMLSGEFRYLTENYGEGIFNGSYLPNDKEYDGEDRRSLFYDHYWSSTSIPRLSGEAKYSHVSDADYLNDFDTLGLSDNTLNLARRAQLNYYNDYVDGELKVETFQTLDALNNNGQMLQDKDKPYSRLPQLNLDYRLPWAKNFDITGVSDSAYFKKSIDDGSENEKSGTRFYNKLSASYPMENSWGYIKPKLSLQHLFTSYDKDSLVDNSLDKDDGNQSVFVPQASIDAGLHFYQAGSPFGAFDDTLGGYRLLSPRLKYTYSPFKDQNNIPNFNTRIASINYEQLFSDSWFLGHDRLQDLHAFTPGINYRYIDATGVTRFDGSIAEQFYIDDGGVTLDNTKPVFTSSSSGLVWDTSTQPYNNVWVDVSGALTNSYDLNYITTELRYQPSDNSLFNVGFIKRQRDENTNQLPLSALTASAVFPINNNWRVLAQGQYDYNRNQMLDSLIGIDYEDCCFGFAVYGRRYYNDLNIADKPTQAIMAEVRLSGLGSGSSRLTRLLADKVLGFEPVQSAWKD.

The first 27 residues, 1-27, serve as a signal peptide directing secretion; sequence MLYSPLYQSIRLILFGALGLSSLTVSA.

The protein belongs to the LptD family. In terms of assembly, component of the lipopolysaccharide transport and assembly complex. Interacts with LptE and LptA.

It localises to the cell outer membrane. Functionally, together with LptE, is involved in the assembly of lipopolysaccharide (LPS) at the surface of the outer membrane. This chain is LPS-assembly protein LptD, found in Psychrobacter arcticus (strain DSM 17307 / VKM B-2377 / 273-4).